Here is a 340-residue protein sequence, read N- to C-terminus: MDGVRNLTVSCASSNTCNDTIDDFRNQVYSTLYSMITVVGFFGNGFVLYVLIKTYHEKSAYQVYMINLAVADLLCVCTLPLRVVYYVHKGIWLFGDFLCRLSTYALYVNLYCSIFFMTAMSFFRCIAIVFPVQNINLITHKKAKIVCIAIWIFVILTSSPFLMSTSYKDEKNNTKCFEPPQXNQAKYHVLVLHYVSLFVGFIIPFVIIIVCYTMIILTLLKNSMKKNISSRKKAIGMIIVVTAAFLISFMPYHIQRTIHLHFLHNDTKHCDSVLRMQKSVXITLSLAASNCCFDPLLYFFSGGNFREGLSTFRKHSLSTMTYVPKKKTSLPEKAQEIYKE.

Residues 1–31 are Extracellular-facing; it reads MDGVRNLTVSCASSNTCNDTIDDFRNQVYST. Asn-6 and Asn-18 each carry an N-linked (GlcNAc...) asparagine glycan. A helical membrane pass occupies residues 32–52; the sequence is LYSMITVVGFFGNGFVLYVLI. At 53–60 the chain is on the cytoplasmic side; it reads KTYHEKSA. A helical membrane pass occupies residues 61-81; sequence YQVYMINLAVADLLCVCTLPL. Residues 82–109 are Extracellular-facing; that stretch reads RVVYYVHKGIWLFGDFLCRLSTYALYVN. The cysteines at positions 99 and 176 are disulfide-linked. A helical membrane pass occupies residues 110 to 130; that stretch reads LYCSIFFMTAMSFFRCIAIVF. Over 131 to 144 the chain is Cytoplasmic; sequence PVQNINLITHKKAK. A helical transmembrane segment spans residues 145 to 165; it reads IVCIAIWIFVILTSSPFLMST. Residues 166–196 are Extracellular-facing; that stretch reads SYKDEKNNTKCFEPPQXNQAKYHVLVLHYVS. N-linked (GlcNAc...) asparagine glycosylation occurs at Asn-172. The chain crosses the membrane as a helical span at residues 197–217; it reads LFVGFIIPFVIIIVCYTMIIL. Topologically, residues 218-233 are cytoplasmic; sequence TLLKNSMKKNISSRKK. The helical transmembrane segment at 234–254 threads the bilayer; the sequence is AIGMIIVVTAAFLISFMPYHI. Topologically, residues 255–279 are extracellular; it reads QRTIHLHFLHNDTKHCDSVLRMQKS. Asn-265 carries an N-linked (GlcNAc...) asparagine glycan. A helical transmembrane segment spans residues 280–300; that stretch reads VXITLSLAASNCCFDPLLYFF. Topologically, residues 301–340 are cytoplasmic; the sequence is SGGNFREGLSTFRKHSLSTMTYVPKKKTSLPEKAQEIYKE.

The protein belongs to the G-protein coupled receptor 1 family.

The protein resides in the cell membrane. In terms of biological role, receptor for cysteinyl leukotrienes mediating constriction of the microvascular smooth muscle during an inflammatory response. This response is mediated via a G-protein that activates a phosphatidylinositol-calcium second messenger system. The sequence is that of Cysteinyl leukotriene receptor 1 (CYSLTR1) from Sus scrofa (Pig).